We begin with the raw amino-acid sequence, 285 residues long: (3S)-malyl-CoA thioesterase (285 aa).

The substrate site is built by arginine 70 and glutamate 122. Positions 122 and 148 each coordinate Mg(2+).

It belongs to the HpcH/HpaI aldolase family. Homodimer or homotrimer. It depends on Mg(2+) as a cofactor.

The enzyme catalyses (S)-malyl-CoA + H2O = (S)-malate + CoA + H(+). With respect to regulation, reversibly inhibited by EDTA. Stimulated by the divalent cations Mg(2+) and Mn(2+). Its function is as follows. Catalyzes the hydrolysis of (3S)-malyl-CoA to (3S)-malate and free CoA. Inactive towards beta-methylmalyl-CoA and other CoA esters. The polypeptide is (3S)-malyl-CoA thioesterase (Cereibacter sphaeroides (strain ATCC 17023 / DSM 158 / JCM 6121 / CCUG 31486 / LMG 2827 / NBRC 12203 / NCIMB 8253 / ATH 2.4.1.) (Rhodobacter sphaeroides)).